The chain runs to 549 residues: Chaperonin GroEL (549 aa).

Residues 30 to 33 (TLGP), Lys-51, 87 to 91 (DGTTT), Gly-415, and Asp-495 each bind ATP.

Belongs to the chaperonin (HSP60) family. Forms a cylinder of 14 subunits composed of two heptameric rings stacked back-to-back. Interacts with the co-chaperonin GroES.

It is found in the cytoplasm. It carries out the reaction ATP + H2O + a folded polypeptide = ADP + phosphate + an unfolded polypeptide.. Functionally, together with its co-chaperonin GroES, plays an essential role in assisting protein folding. The GroEL-GroES system forms a nano-cage that allows encapsulation of the non-native substrate proteins and provides a physical environment optimized to promote and accelerate protein folding. In Hahella chejuensis (strain KCTC 2396), this protein is Chaperonin GroEL.